A 42-amino-acid chain; its full sequence is Histone H1B (42 aa).

Residues 1–42 enclose the H15 domain; it reads TYYELIKAAILALKERNGSSAQAIKKYILENNKIEFQQTFLR.

Belongs to the histone H1/H5 family.

The protein resides in the nucleus. It is found in the chromosome. Functionally, histones H1 are necessary for the condensation of nucleosome chains into higher-order structures. This is Histone H1B from Olisthodiscus luteus (Marine phytoflagellate).